We begin with the raw amino-acid sequence, 130 residues long: Transcription antitermination protein NusB (130 aa).

This sequence belongs to the NusB family.

In terms of biological role, involved in transcription antitermination. Required for transcription of ribosomal RNA (rRNA) genes. Binds specifically to the boxA antiterminator sequence of the ribosomal RNA (rrn) operons. This is Transcription antitermination protein NusB from Bacillus velezensis (strain DSM 23117 / BGSC 10A6 / LMG 26770 / FZB42) (Bacillus amyloliquefaciens subsp. plantarum).